Consider the following 401-residue polypeptide: Probable tRNA sulfurtransferase (401 aa).

The THUMP domain maps to 60-165; the sequence is EALFPHLKQV…EEATFLTIRD (106 aa). Residues 183–184, 208–209, Arg-265, Gly-287, and Gln-296 contribute to the ATP site; these read ML and HF.

Belongs to the ThiI family.

It localises to the cytoplasm. It carries out the reaction [ThiI sulfur-carrier protein]-S-sulfanyl-L-cysteine + a uridine in tRNA + 2 reduced [2Fe-2S]-[ferredoxin] + ATP + H(+) = [ThiI sulfur-carrier protein]-L-cysteine + a 4-thiouridine in tRNA + 2 oxidized [2Fe-2S]-[ferredoxin] + AMP + diphosphate. The enzyme catalyses [ThiS sulfur-carrier protein]-C-terminal Gly-Gly-AMP + S-sulfanyl-L-cysteinyl-[cysteine desulfurase] + AH2 = [ThiS sulfur-carrier protein]-C-terminal-Gly-aminoethanethioate + L-cysteinyl-[cysteine desulfurase] + A + AMP + 2 H(+). Its pathway is cofactor biosynthesis; thiamine diphosphate biosynthesis. In terms of biological role, catalyzes the ATP-dependent transfer of a sulfur to tRNA to produce 4-thiouridine in position 8 of tRNAs, which functions as a near-UV photosensor. Also catalyzes the transfer of sulfur to the sulfur carrier protein ThiS, forming ThiS-thiocarboxylate. This is a step in the synthesis of thiazole, in the thiamine biosynthesis pathway. The sulfur is donated as persulfide by IscS. In Bacillus subtilis (strain 168), this protein is Probable tRNA sulfurtransferase.